We begin with the raw amino-acid sequence, 320 residues long: Flavonol 4'-sulfotransferase (320 aa).

69-74 (KSGTTW) lines the 3'-phosphoadenylyl sulfate pocket. His129 (proton acceptor) is an active-site residue. 3'-phosphoadenylyl sulfate is bound by residues Arg151, Ser159, Tyr217, and 285–287 (RKA).

Belongs to the sulfotransferase 1 family. As to expression, highest in shoot tips and lowest in mature leaves and roots.

Its subcellular location is the cytoplasm. It carries out the reaction quercetin 3-sulfate + 3'-phosphoadenylyl sulfate = quercetin 3,4'-bissulfate + adenosine 3',5'-bisphosphate + H(+). Its activity is regulated as follows. No requirement for divalent cations and insensitive to p-chloromercuribenzoate, iodoacetate, or iodoacetamide. In terms of biological role, sulfotransferase that utilizes 3'-phospho-5'-adenylyl sulfate (PAPS) as sulfonate donor to catalyze the sulfate conjugation of quercetin 3-sulfate &gt; kaempferol 3-sulfate &gt; isorhamnetin 3-sulfate &gt; patuletin 3-sulfate, but not tamarixetin 3-sulfate. O-sulfation of position 4' of flavonol. May play a role in auxin transport. This Flaveria chlorifolia (Clasping yellowtops) protein is Flavonol 4'-sulfotransferase.